A 554-amino-acid polypeptide reads, in one-letter code: MSAAVALAVILAVYVVLRYISSPRGRSKPLNLPPGPRGWPVIGSLGALAGALPPHRALAALAARHGPLMHLRLGSYHAVVASSADTARLVLKVHDLAFADRPRTAAGEVASYGYLGIVHTPYGAYWRMARKLCATELFSARRVDSFERVRAQEMRALARGLFECAGRGAVAVREHVAGATLRNILRMAVGEKWSGCYGSPEGEAFRRTLDEAFAVTGAVSNVGEWVPWLGWLDLQGCVRRMKRLRAQYDRFFEQILDDHDHKKTRRERGRPGAGDSAADDDLVDVLLRLVEEDEDRPETTEASRLTRDGVKAFVQDIVAGGTESSAVTIEWAMSELLRRPDALRAATAELDRVIGHGRWVTERDLPDLPYIDAVVKETMRLHPVGPLLVPHHAREHTVVAGYDVPAGARVLVNVWAIARDPASWPDAPDAFRPERFLNGSSGASVDVRGAHFELLPFGAGRRMCPAHGLAMKLVTAGVANLVHGFAWRLPDGMAPEDVSMEELFGLSTRRKVPLVAVAEPRLPAHLYTNVTPPQQVAGSTIANLSTRPEYKLVF.

A helical transmembrane segment spans residues 1–21 (MSAAVALAVILAVYVVLRYIS). Cysteine 464 lines the heme pocket.

This sequence belongs to the cytochrome P450 family. Heme is required as a cofactor.

It localises to the membrane. The enzyme catalyses (6E,10E)-geranyllinalool + reduced [NADPH--hemoprotein reductase] + O2 = (3E,7E)-4,8,12-trimethyltrideca 1,3,7,11-tetraene + but-3-en-2-one + oxidized [NADPH--hemoprotein reductase] + 2 H2O + H(+). The protein operates within secondary metabolite biosynthesis; terpenoid biosynthesis. Functionally, component of the volatile terpenes biosynthesis pathways. Converts mainly geranyllinalool to trimethyltridecatetraene (TMTT). This chain is Trimethyltridecatetraene synthase, found in Zea mays (Maize).